Here is a 316-residue protein sequence, read N- to C-terminus: Biotin synthase (316 aa).

Residues 38–266 enclose the Radical SAM core domain; sequence YKGKKIELCA…DKDIRVCGGR (229 aa). 3 residues coordinate [4Fe-4S] cluster: Cys-56, Cys-60, and Cys-63. The [2Fe-2S] cluster site is built by Ser-100, Cys-131, Cys-191, and Arg-261.

Belongs to the radical SAM superfamily. Biotin synthase family. In terms of assembly, homodimer. It depends on [4Fe-4S] cluster as a cofactor. Requires [2Fe-2S] cluster as cofactor.

It catalyses the reaction (4R,5S)-dethiobiotin + (sulfur carrier)-SH + 2 reduced [2Fe-2S]-[ferredoxin] + 2 S-adenosyl-L-methionine = (sulfur carrier)-H + biotin + 2 5'-deoxyadenosine + 2 L-methionine + 2 oxidized [2Fe-2S]-[ferredoxin]. Its pathway is cofactor biosynthesis; biotin biosynthesis; biotin from 7,8-diaminononanoate: step 2/2. In terms of biological role, catalyzes the conversion of dethiobiotin (DTB) to biotin by the insertion of a sulfur atom into dethiobiotin via a radical-based mechanism. This is Biotin synthase from Thermodesulfovibrio yellowstonii (strain ATCC 51303 / DSM 11347 / YP87).